Reading from the N-terminus, the 100-residue chain is Tetrahydromethanopterin S-methyltransferase subunit B (100 aa).

Residues 80 to 100 (KLTNIVYGFILGLIILFALLL) traverse the membrane as a helical segment.

Belongs to the MtrB family. As to quaternary structure, the complex is composed of 8 subunits; MtrA, MtrB, MtrC, MtrD, MtrE, MtrF, MtrG and MtrH.

The protein localises to the cell membrane. The enzyme catalyses 5-methyl-5,6,7,8-tetrahydromethanopterin + coenzyme M + 2 Na(+)(in) = 5,6,7,8-tetrahydromethanopterin + methyl-coenzyme M + 2 Na(+)(out). The protein operates within one-carbon metabolism; methanogenesis from CO(2); methyl-coenzyme M from 5,10-methylene-5,6,7,8-tetrahydromethanopterin: step 2/2. Part of a complex that catalyzes the formation of methyl-coenzyme M and tetrahydromethanopterin from coenzyme M and methyl-tetrahydromethanopterin. This is an energy-conserving, sodium-ion translocating step. This Methanothermobacter marburgensis (strain ATCC BAA-927 / DSM 2133 / JCM 14651 / NBRC 100331 / OCM 82 / Marburg) (Methanobacterium thermoautotrophicum) protein is Tetrahydromethanopterin S-methyltransferase subunit B.